The primary structure comprises 198 residues: Imidazoleglycerol-phosphate dehydratase (198 aa).

It belongs to the imidazoleglycerol-phosphate dehydratase family.

The protein resides in the cytoplasm. The enzyme catalyses D-erythro-1-(imidazol-4-yl)glycerol 3-phosphate = 3-(imidazol-4-yl)-2-oxopropyl phosphate + H2O. Its pathway is amino-acid biosynthesis; L-histidine biosynthesis; L-histidine from 5-phospho-alpha-D-ribose 1-diphosphate: step 6/9. This Methylobacillus flagellatus (strain ATCC 51484 / DSM 6875 / VKM B-1610 / KT) protein is Imidazoleglycerol-phosphate dehydratase.